A 245-amino-acid chain; its full sequence is Dehydrogenase/reductase SDR family member 6 (245 aa).

Residues 16-18, aspartate 37, and aspartate 58 each bind NAD(+); that span reads QGI. Arginine 144 contributes to the substrate binding site. Catalysis depends on tyrosine 147, which acts as the Proton acceptor. NAD(+) contacts are provided by residues lysine 151 and 180–184; that span reads VDTPS. Arginine 188 and arginine 205 together coordinate substrate.

The protein belongs to the short-chain dehydrogenases/reductases (SDR) family. In terms of assembly, homotetramer.

It localises to the cytoplasm. It carries out the reaction cis-4-hydroxy-L-proline + NAD(+) = 4-oxo-L-proline + NADH + H(+). The enzyme catalyses (R)-3-hydroxybutanoate + NAD(+) = acetoacetate + NADH + H(+). It participates in amino-acid metabolism. It functions in the pathway siderophore biosynthesis. NAD(H)-dependent dehydrogenase/reductase with a preference for cyclic substrates. Catalyzes stereoselective conversion of 4-oxo-L-proline to cis-4-hydroxy-L-proline, likely a detoxification mechanism for ketoprolines. Mediates the formation of 2,5-dihydroxybenzoate (2,5-DHBA), a siderophore that chelates free cytoplasmic iron, thereby regulating iron transport and homeostasis while protecting cells against free radical-induced oxidative stress. The iron-siderophore complex is imported into mitochondria, providing an iron source for mitochondrial metabolic processes in particular heme synthesis. May act as a 3-hydroxybutyrate dehydrogenase. This is Dehydrogenase/reductase SDR family member 6 (bdh2) from Aquarana catesbeiana (American bullfrog).